The chain runs to 427 residues: BSD domain-containing protein 1 (427 aa).

Residues S92 and S166 each carry the phosphoserine modification. One can recognise a BSD domain in the interval 146 to 198 (WLSEFCLEEKKGEISELLVGSPSIRALYTKMVPAAVSHSEFWHRYFYKVHQLE). Residues 208–397 (KQRADQSISE…ISEDWEKDFD (190 aa)) form a disordered region. The segment covering 219–229 (PGWEEEEEELE) has biased composition (acidic residues). A compositionally biased stretch (basic and acidic residues) spans 236–245 (KEAKIPKETK). The span at 268–279 (PAEATPSESSES) shows a compositional bias: low complexity. The segment covering 324-333 (GPPPPPPSKP) has biased composition (pro residues). The segment covering 347–364 (PPARVETLREEVPTDLRV) has biased composition (basic and acidic residues). Phosphothreonine is present on T353. Polar residues predominate over residues 368–387 (NSDSGKSTPSNNGKKGSSTD). Phosphoserine occurs at positions 384 and 385. Residues 388 to 397 (ISEDWEKDFD) are compositionally biased toward acidic residues. S415 is subject to Phosphoserine.

This is BSD domain-containing protein 1 (Bsdc1) from Mus musculus (Mouse).